A 429-amino-acid polypeptide reads, in one-letter code: Histidinol dehydrogenase (429 aa).

The NAD(+) site is built by tyrosine 127, glutamine 188, and asparagine 211. Residues serine 234, glutamine 256, and histidine 259 each coordinate substrate. 2 residues coordinate Zn(2+): glutamine 256 and histidine 259. Active-site proton acceptor residues include glutamate 324 and histidine 325. 4 residues coordinate substrate: histidine 325, aspartate 358, glutamate 412, and histidine 417. A Zn(2+)-binding site is contributed by aspartate 358. Position 417 (histidine 417) interacts with Zn(2+).

Belongs to the histidinol dehydrogenase family. Zn(2+) is required as a cofactor.

It catalyses the reaction L-histidinol + 2 NAD(+) + H2O = L-histidine + 2 NADH + 3 H(+). The protein operates within amino-acid biosynthesis; L-histidine biosynthesis; L-histidine from 5-phospho-alpha-D-ribose 1-diphosphate: step 9/9. In terms of biological role, catalyzes the sequential NAD-dependent oxidations of L-histidinol to L-histidinaldehyde and then to L-histidine. In Bacillus anthracis, this protein is Histidinol dehydrogenase.